Here is a 466-residue protein sequence, read N- to C-terminus: Ribulose bisphosphate carboxylase large chain (466 aa).

Residue K5 is modified to N6,N6,N6-trimethyllysine. Residues N114 and T164 each coordinate substrate. K166 functions as the Proton acceptor in the catalytic mechanism. Position 168 (K168) interacts with substrate. Residues K192, D194, and E195 each contribute to the Mg(2+) site. An N6-carboxylysine modification is found at K192. H285 functions as the Proton acceptor in the catalytic mechanism. Substrate-binding residues include R286, H318, and S370.

This sequence belongs to the RuBisCO large chain family. Type I subfamily. As to quaternary structure, heterohexadecamer of 8 large chains and 8 small chains; disulfide-linked. The disulfide link is formed within the large subunit homodimers. Requires Mg(2+) as cofactor. Post-translationally, the disulfide bond which can form in the large chain dimeric partners within the hexadecamer appears to be associated with oxidative stress and protein turnover.

Its subcellular location is the plastid. The protein localises to the chloroplast. The enzyme catalyses 2 (2R)-3-phosphoglycerate + 2 H(+) = D-ribulose 1,5-bisphosphate + CO2 + H2O. It catalyses the reaction D-ribulose 1,5-bisphosphate + O2 = 2-phosphoglycolate + (2R)-3-phosphoglycerate + 2 H(+). In terms of biological role, ruBisCO catalyzes two reactions: the carboxylation of D-ribulose 1,5-bisphosphate, the primary event in carbon dioxide fixation, as well as the oxidative fragmentation of the pentose substrate in the photorespiration process. Both reactions occur simultaneously and in competition at the same active site. This is Ribulose bisphosphate carboxylase large chain from Saururus cernuus (Lizard's tail).